The primary structure comprises 67 residues: ATP synthase F(0) complex subunit 8 (67 aa).

Residues 8–24 (TWFITIVSMLLSLFILM) form a helical membrane-spanning segment. Lys-54 is subject to N6-acetyllysine; alternate. Lys-54 is subject to N6-succinyllysine; alternate. The residue at position 57 (Lys-57) is an N6-acetyllysine.

It belongs to the ATPase protein 8 family. Component of the ATP synthase complex composed at least of ATP5F1A/subunit alpha, ATP5F1B/subunit beta, ATP5MC1/subunit c (homooctomer), MT-ATP6/subunit a, MT-ATP8/subunit 8, ATP5ME/subunit e, ATP5MF/subunit f, ATP5MG/subunit g, ATP5MK/subunit k, ATP5MJ/subunit j, ATP5F1C/subunit gamma, ATP5F1D/subunit delta, ATP5F1E/subunit epsilon, ATP5PF/subunit F6, ATP5PB/subunit b, ATP5PD/subunit d, ATP5PO/subunit OSCP. ATP synthase complex consists of a soluble F(1) head domain (subunits alpha(3) and beta(3)) - the catalytic core - and a membrane F(0) domain - the membrane proton channel (subunits c, a, 8, e, f, g, k and j). These two domains are linked by a central stalk (subunits gamma, delta, and epsilon) rotating inside the F1 region and a stationary peripheral stalk (subunits F6, b, d, and OSCP). Interacts with PRICKLE3.

It is found in the mitochondrion membrane. Its function is as follows. Subunit 8, of the mitochondrial membrane ATP synthase complex (F(1)F(0) ATP synthase or Complex V) that produces ATP from ADP in the presence of a proton gradient across the membrane which is generated by electron transport complexes of the respiratory chain. ATP synthase complex consist of a soluble F(1) head domain - the catalytic core - and a membrane F(1) domain - the membrane proton channel. These two domains are linked by a central stalk rotating inside the F(1) region and a stationary peripheral stalk. During catalysis, ATP synthesis in the catalytic domain of F(1) is coupled via a rotary mechanism of the central stalk subunits to proton translocation. In vivo, can only synthesize ATP although its ATP hydrolase activity can be activated artificially in vitro. Part of the complex F(0) domain. The protein is ATP synthase F(0) complex subunit 8 of Dasypus novemcinctus (Nine-banded armadillo).